The primary structure comprises 60 residues: Protein CADMIUM TOLERANCE 4 (60 aa).

A helical transmembrane segment spans residues 26–42 (GFLYACLFMLCCCFCCY).

Belongs to the CYSTM1 family. As to expression, mainly expressed in shoots, and, to a lower extent, in roots.

It is found in the cell membrane. It localises to the secreted. Its subcellular location is the cell wall. Its function is as follows. Confers resistance to heavy metal ions (e.g. aluminium (Al)) by chelating them at the plasma membrane of root cells, thus stopping their entry and reducing their accumulation. The protein is Protein CADMIUM TOLERANCE 4 of Oryza sativa subsp. japonica (Rice).